The primary structure comprises 47 residues: Delta-actitoxin-Axm1e (47 aa).

Intrachain disulfides connect C4–C44, C6–C34, and C27–C45.

This sequence belongs to the sea anemone sodium channel inhibitory toxin family. Type I subfamily.

It is found in the secreted. Its subcellular location is the nematocyst. Functionally, binds specifically to voltage-gated sodium channels (Nav), thereby delaying their inactivation. This toxin is active on a variety of voltage-gated sodium channels (Nav1.1/SCN1A, Nav1.2/SCN2A, Nav1.3/SCN3A, Nav1.4/SCN4A, Nav1.5/SCN5A and Nav1.6/SCN8A). The sequence is that of Delta-actitoxin-Axm1e from Anthopleura xanthogrammica (Giant green sea anemone).